Consider the following 432-residue polypeptide: MRVVLIDGEHYPDVTKWAIHKLGDVCCAVFLGGTEKIGSLKALEDKIGVPLYHSPNYLDALKRAVLENDVEEVVDLSDEPVLTYEDRFRIASLCMLLGVTYRGADFTFTPKPLKKTKKPSISIIGTGKRVGKTAVSGFVARTLKEVARPVVVTMGRGGPEEPELIEGEKIELTPQFLLKVAKEGKHAASDHFEDALTSRVTTIGCRRCGGGMAGFPFFDVVDKGVELAESLPHDLIILEGSGATFPAYRTDAYILIIGGRQKTDFLRGYFGPFRIALADLIIVTMSDEINPEKRAEIRKIVEEINPKADLHFTAFRPRPLGNISGKKLGLVMTSQSALPKAKEHLEGLGAEVVATSGNLSNRPKLREDLEKFRGIDAVAVELKAAAVDVVTKWALERGIEVIYLDNEPVNIDGKDLRKSVLELGKRVLGRRA.

The protein belongs to the cyclic 2,3-diphosphoglycerate synthetase family.

The protein localises to the cytoplasm. It catalyses the reaction (2R)-2,3-bisphosphoglycerate + ATP + H(+) = cyclic (2R)-2,3-bisphosphoglycerate + ADP + phosphate. In terms of biological role, catalyzes the formation of cyclic 2,3-diphosphoglycerate (cDPG) by formation of an intramolecular phosphoanhydride bond at the expense of ATP. The sequence is that of Cyclic 2,3-diphosphoglycerate synthetase from Thermococcus kodakarensis (strain ATCC BAA-918 / JCM 12380 / KOD1) (Pyrococcus kodakaraensis (strain KOD1)).